A 340-amino-acid polypeptide reads, in one-letter code: Armadillo repeat-containing protein 12 (340 aa).

Residues 1–101 are interaction with TBC1D15; sequence MGKSIPQYLG…SITRCVYLLE (101 aa). ARM repeat units follow at residues 100–139, 179–218, and 278–318; these read LEAE…AFSG, LPDY…YLAQ, and SLHE…SLQY.

Interacts with TBC1D15, TBC1D21, GK2 and IMMT. Interacts with VDAC2 and VDAC3 in a TBC1D21-dependent manner. Interacts (via ARM domains) with RBBP4. As to expression, expressed in testis. Highly expressed in the mid-piece of the elongated and late spermatids. Expressed at higher levels in neuroblastoma tissues and cell lines, than those of normal dorsal ganglia (at protein level). Expressed in breast cancer, colon cancer, hepatocellular carcinoma, lung cancer, pancreas cancer, prostate cancer, renal cancer and gastric cancer, but not in their normal counterparts.

Its subcellular location is the nucleus. The protein resides in the mitochondrion outer membrane. Essential for male fertility and sperm mitochondrial sheath formation. Required for proper mitochondrial elongation and coiling along the flagellum during the formation of the mitochondrial sheath. Facilitates the growth and aggressiveness of neuroblastoma cells. Increases the EZH2 activity and H3K27me3 levels in a RBBP4-dependent manner, and facilitates the enrichment of polycomb repressive complex 2 and H3K27me3 on gene promoters, resulting in transcriptional repression of tumor suppressors affecting the proliferation, invasion, and metastasis of tumor cells. This Homo sapiens (Human) protein is Armadillo repeat-containing protein 12 (ARMC12).